The chain runs to 514 residues: 2,3-bisphosphoglycerate-independent phosphoglycerate mutase (514 aa).

The Mn(2+) site is built by Asp-14 and Ser-64. Ser-64 functions as the Phosphoserine intermediate in the catalytic mechanism. Residues His-125, 155 to 156, Arg-187, Arg-193, 263 to 266, and Lys-336 each bind substrate; these read RD and RADR. The Mn(2+) site is built by Asp-403, His-407, Asp-444, His-445, and His-463.

It belongs to the BPG-independent phosphoglycerate mutase family. As to quaternary structure, monomer. Mn(2+) is required as a cofactor.

The catalysed reaction is (2R)-2-phosphoglycerate = (2R)-3-phosphoglycerate. Its pathway is carbohydrate degradation; glycolysis; pyruvate from D-glyceraldehyde 3-phosphate: step 3/5. Catalyzes the interconversion of 2-phosphoglycerate and 3-phosphoglycerate. The polypeptide is 2,3-bisphosphoglycerate-independent phosphoglycerate mutase (Shewanella sp. (strain W3-18-1)).